Here is a 212-residue protein sequence, read N- to C-terminus: Glycerol-3-phosphate acyltransferase (212 aa).

The next 5 helical transmembrane spans lie at 3–23, 70–90, 110–130, 143–163, and 164–184; these read IIIM…LWIG, IPII…FAII, AGVL…IFLL, ITVA…GFIL, and TDYD…IIIR.

The protein belongs to the PlsY family. Probably interacts with PlsX.

The protein resides in the cell membrane. It catalyses the reaction an acyl phosphate + sn-glycerol 3-phosphate = a 1-acyl-sn-glycero-3-phosphate + phosphate. The protein operates within lipid metabolism; phospholipid metabolism. Its function is as follows. Catalyzes the transfer of an acyl group from acyl-phosphate (acyl-PO(4)) to glycerol-3-phosphate (G3P) to form lysophosphatidic acid (LPA). This enzyme utilizes acyl-phosphate as fatty acyl donor, but not acyl-CoA or acyl-ACP. The chain is Glycerol-3-phosphate acyltransferase from Streptococcus agalactiae serotype III (strain NEM316).